The sequence spans 87 residues: Small ribosomal subunit protein uS19 (87 aa).

It belongs to the universal ribosomal protein uS19 family.

Protein S19 forms a complex with S13 that binds strongly to the 16S ribosomal RNA. The protein is Small ribosomal subunit protein uS19 (rpsS) of Mycoplasma genitalium (strain ATCC 33530 / DSM 19775 / NCTC 10195 / G37) (Mycoplasmoides genitalium).